The sequence spans 200 residues: CASP-like protein 1U2 (200 aa).

Topologically, residues 1 to 33 are cytoplasmic; the sequence is MAEPVIVVPRKGVYSDDSYHHHHRHHSFHSCTN. The chain crosses the membrane as a helical span at residues 34–54; sequence FLLRTLTAGATAAAVVVMLIS. Residues 55-77 lie on the Extracellular side of the membrane; that stretch reads TQTSGTIYGYFRGRWRDYPAYKW. The chain crosses the membrane as a helical span at residues 78-98; that stretch reads LIIANAVVFVYSVMAAIVACF. Topologically, residues 99 to 120 are cytoplasmic; sequence SVIARRGPLSYSPSAWLTLLVD. The helical transmembrane segment at 121–141 threads the bilayer; it reads FLAASALISAASAALAVALLA. At 142-168 the chain is on the extracellular side; that stretch reads RNGQDLQGTHYWPTVCNYVSKFCDYTQ. The helical transmembrane segment at 169–189 threads the bilayer; sequence GAIIASFVGFGLLFLSTLLAA. The Cytoplasmic segment spans residues 190–200; it reads SALYHLSHRRH.

Belongs to the Casparian strip membrane proteins (CASP) family. As to quaternary structure, homodimer and heterodimers.

The protein localises to the cell membrane. This chain is CASP-like protein 1U2, found in Physcomitrium patens (Spreading-leaved earth moss).